Here is a 639-residue protein sequence, read N- to C-terminus: Altered inheritance of mitochondria protein 9, mitochondrial (639 aa).

The transit peptide at 1 to 45 directs the protein to the mitochondrion; that stretch reads MLMSKAPKLGNLLSKNSIKIVSGSKLRCNLKYINVRYISDTPDKV. A disordered region spans residues 619–639; sequence VSSEAQSEVQSEVQSSTENKD.

It belongs to the AIM9 family.

It is found in the mitochondrion. In Vanderwaltozyma polyspora (strain ATCC 22028 / DSM 70294 / BCRC 21397 / CBS 2163 / NBRC 10782 / NRRL Y-8283 / UCD 57-17) (Kluyveromyces polysporus), this protein is Altered inheritance of mitochondria protein 9, mitochondrial (AIM9).